The chain runs to 152 residues: ESAT-6 secretion machinery protein EssA (152 aa).

Residues methionine 1 to lysine 114 are Cytoplasmic-facing. Residues isoleucine 115–serine 135 traverse the membrane as a helical segment. Residues isoleucine 136 to isoleucine 152 are Extracellular-facing.

This sequence belongs to the EssA family.

The protein resides in the cell membrane. Component of the ESAT-6 secretion system (Ess). Required for the secretion of EsxA and EsxB. The protein is ESAT-6 secretion machinery protein EssA of Staphylococcus aureus (strain Mu50 / ATCC 700699).